A 148-amino-acid polypeptide reads, in one-letter code: Transcriptional regulator MraZ (148 aa).

2 consecutive SpoVT-AbrB domains span residues 5–51 (STQL…PQPV) and 80–123 (ASDV…DMAK).

It belongs to the MraZ family. In terms of assembly, forms oligomers.

The protein resides in the cytoplasm. The protein localises to the nucleoid. The protein is Transcriptional regulator MraZ of Nitrosomonas europaea (strain ATCC 19718 / CIP 103999 / KCTC 2705 / NBRC 14298).